The following is a 387-amino-acid chain: Histone deacetylase 2 (387 aa).

The tract at residues 73–382 is histone deacetylase; the sequence is KVSIIYSSSY…IENLSRQGLI (310 aa). His-201 (proton donor/acceptor) is an active-site residue. Zn(2+) is bound by residues Asp-238, His-240, and Asp-318.

The protein belongs to the histone deacetylase family. HD type 3 subfamily. Zn(2+) serves as cofactor.

The protein resides in the nucleus. It catalyses the reaction N(6)-acetyl-L-lysyl-[histone] + H2O = L-lysyl-[histone] + acetate. Responsible for the deacetylation of lysine residues on the N-terminal part of the core histones (H2A, H2B, H3 and H4). Histone deacetylation gives a tag for epigenetic repression and plays an important role in transcriptional regulation, cell cycle progression and developmental events. Histone deacetylases act via the formation of large multiprotein complexes. The polypeptide is Histone deacetylase 2 (HDA2) (Arabidopsis thaliana (Mouse-ear cress)).